Here is a 151-residue protein sequence, read N- to C-terminus: UPF0178 protein amb2838 (151 aa).

It belongs to the UPF0178 family.

This is UPF0178 protein amb2838 from Paramagnetospirillum magneticum (strain ATCC 700264 / AMB-1) (Magnetospirillum magneticum).